Consider the following 357-residue polypeptide: Holliday junction branch migration complex subunit RuvB (357 aa).

Residues T4–Y195 form a large ATPase domain (RuvB-L) region. ATP-binding positions include L34, R35, G76, K79, T80, T81, E142 to Y144, R185, Y195, and R232. Residue T80 participates in Mg(2+) binding. A small ATPAse domain (RuvB-S) region spans residues T196–D266. The head domain (RuvB-H) stretch occupies residues A269 to Q357. 3 residues coordinate DNA: R305, R324, and R329.

It belongs to the RuvB family. Homohexamer. Forms an RuvA(8)-RuvB(12)-Holliday junction (HJ) complex. HJ DNA is sandwiched between 2 RuvA tetramers; dsDNA enters through RuvA and exits via RuvB. An RuvB hexamer assembles on each DNA strand where it exits the tetramer. Each RuvB hexamer is contacted by two RuvA subunits (via domain III) on 2 adjacent RuvB subunits; this complex drives branch migration. In the full resolvosome a probable DNA-RuvA(4)-RuvB(12)-RuvC(2) complex forms which resolves the HJ.

The protein resides in the cytoplasm. The enzyme catalyses ATP + H2O = ADP + phosphate + H(+). In terms of biological role, the RuvA-RuvB-RuvC complex processes Holliday junction (HJ) DNA during genetic recombination and DNA repair, while the RuvA-RuvB complex plays an important role in the rescue of blocked DNA replication forks via replication fork reversal (RFR). RuvA specifically binds to HJ cruciform DNA, conferring on it an open structure. The RuvB hexamer acts as an ATP-dependent pump, pulling dsDNA into and through the RuvAB complex. RuvB forms 2 homohexamers on either side of HJ DNA bound by 1 or 2 RuvA tetramers; 4 subunits per hexamer contact DNA at a time. Coordinated motions by a converter formed by DNA-disengaged RuvB subunits stimulates ATP hydrolysis and nucleotide exchange. Immobilization of the converter enables RuvB to convert the ATP-contained energy into a lever motion, pulling 2 nucleotides of DNA out of the RuvA tetramer per ATP hydrolyzed, thus driving DNA branch migration. The RuvB motors rotate together with the DNA substrate, which together with the progressing nucleotide cycle form the mechanistic basis for DNA recombination by continuous HJ branch migration. Branch migration allows RuvC to scan DNA until it finds its consensus sequence, where it cleaves and resolves cruciform DNA. This is Holliday junction branch migration complex subunit RuvB from Ralstonia pickettii (strain 12J).